We begin with the raw amino-acid sequence, 360 residues long: uncharacterized protein (360 aa).

7 helical membrane-spanning segments follow: residues 26 to 48 (SVCY…SGAT), 58 to 80 (LHPL…ASVL), 89 to 111 (VMGL…NIAH), 126 to 148 (LSTG…SILA), 169 to 191 (RLAY…PTAL), 195 to 214 (IPSV…YALL), and 227 to 249 (CALC…SHMV).

Its subcellular location is the cell membrane. This is an uncharacterized protein from Treponema pallidum (strain Nichols).